We begin with the raw amino-acid sequence, 105 residues long: Insulin (105 aa).

The signal sequence occupies residues 1–24; the sequence is MALWTRLRPLLALLALWPPPPARA. Intrachain disulfides connect Cys-31/Cys-91, Cys-43/Cys-104, and Cys-90/Cys-95. Residues 57–82 constitute a propeptide, c peptide; that stretch reads EVEGPQVGALELAGGPGAGGLEGPPQ.

Belongs to the insulin family. Heterodimer of a B chain and an A chain linked by two disulfide bonds.

It is found in the secreted. Its function is as follows. Insulin decreases blood glucose concentration. It increases cell permeability to monosaccharides, amino acids and fatty acids. It accelerates glycolysis, the pentose phosphate cycle, and glycogen synthesis in liver. The chain is Insulin (INS) from Bos taurus (Bovine).